The sequence spans 239 residues: Probable transcriptional regulatory protein Pnuc_0618 (239 aa).

Residues 1–21 (MAGHSKWANIQHRKGRQDEKR) are disordered.

This sequence belongs to the TACO1 family.

Its subcellular location is the cytoplasm. The protein is Probable transcriptional regulatory protein Pnuc_0618 of Polynucleobacter asymbioticus (strain DSM 18221 / CIP 109841 / QLW-P1DMWA-1) (Polynucleobacter necessarius subsp. asymbioticus).